A 370-amino-acid polypeptide reads, in one-letter code: Protein RecA (370 aa).

Residues 1 to 20 (MSFEERRKKDSKESSSKEKD) form a disordered region. ATP is bound at residue 78-85 (GPESSGKT).

It belongs to the RecA family.

It localises to the cytoplasm. Can catalyze the hydrolysis of ATP in the presence of single-stranded DNA, the ATP-dependent uptake of single-stranded DNA by duplex DNA, and the ATP-dependent hybridization of homologous single-stranded DNAs. It interacts with LexA causing its activation and leading to its autocatalytic cleavage. This is Protein RecA from Prochlorococcus marinus (strain MIT 9515).